A 534-amino-acid chain; its full sequence is Beta-glucosidase 31 (534 aa).

The first 22 residues, 1 to 22, serve as a signal peptide directing secretion; that stretch reads MAIKLIALVITLCVASWDVAQG. Gln51 contributes to the a beta-D-glucoside binding site. The N-linked (GlcNAc...) asparagine glycan is linked to Asn68. A beta-D-glucoside is bound by residues His154 and 199-200; that span reads NE. The active-site Proton donor is the Glu200. Cys219 and Cys227 are joined by a disulfide. Tyr344 provides a ligand contact to a beta-D-glucoside. Residue Asn374 is glycosylated (N-linked (GlcNAc...) asparagine). Position 417 (Glu417) interacts with a beta-D-glucoside. Glu417 serves as the catalytic Nucleophile. A glycan (N-linked (GlcNAc...) asparagine) is linked at Asn425. A beta-D-glucoside contacts are provided by residues Trp467, 474-475, and Phe483; that span reads EW.

This sequence belongs to the glycosyl hydrolase 1 family.

It carries out the reaction Hydrolysis of terminal, non-reducing beta-D-glucosyl residues with release of beta-D-glucose.. This Arabidopsis thaliana (Mouse-ear cress) protein is Beta-glucosidase 31.